We begin with the raw amino-acid sequence, 223 residues long: Probable GTP-binding protein EngB (223 aa).

In terms of domain architecture, EngB-type G spans 49 to 223 (MGVEIAFAGR…LRAALAGLTD (175 aa)). GTP is bound by residues 57–64 (GRSNVGKS), 84–88 (GRTKQ), 102–105 (DMPG), 169–172 (TKAD), and 203–205 (TSS). S64 and T86 together coordinate Mg(2+).

The protein belongs to the TRAFAC class TrmE-Era-EngA-EngB-Septin-like GTPase superfamily. EngB GTPase family. Mg(2+) serves as cofactor.

Functionally, necessary for normal cell division and for the maintenance of normal septation. The polypeptide is Probable GTP-binding protein EngB (Granulibacter bethesdensis (strain ATCC BAA-1260 / CGDNIH1)).